Here is a 117-residue protein sequence, read N- to C-terminus: Immunoglobulin heavy variable 5-10-1 (117 aa).

The N-terminal stretch at 1–19 (MGSTAILALLLAVLQGVCA) is a signal peptide. Positions 20 to 44 (EVQLVQSGAEVKKPGESLRISCKGS) are framework-1. An Ig-like domain is found at 20-117 (EVQLVQSGAE…SDTAMYYCAR (98 aa)). The cysteines at positions 41 and 115 are disulfide-linked. Positions 45–52 (GYSFTSYW) are complementarity-determining-1. Residues 53–69 (ISWVRQMPGKGLEWMGR) form a framework-2 region. The interval 70–77 (IDPSDSYT) is complementarity-determining-2. Residues 78–115 (NYSPSFQGHVTISADKSISTAYLQWSSLKASDTAMYYC) are framework-3. The complementarity-determining-3 stretch occupies residues 116–117 (AR).

As to quaternary structure, immunoglobulins are composed of two identical heavy chains and two identical light chains; disulfide-linked.

The protein localises to the secreted. The protein resides in the cell membrane. Functionally, v region of the variable domain of immunoglobulin heavy chains that participates in the antigen recognition. Immunoglobulins, also known as antibodies, are membrane-bound or secreted glycoproteins produced by B lymphocytes. In the recognition phase of humoral immunity, the membrane-bound immunoglobulins serve as receptors which, upon binding of a specific antigen, trigger the clonal expansion and differentiation of B lymphocytes into immunoglobulins-secreting plasma cells. Secreted immunoglobulins mediate the effector phase of humoral immunity, which results in the elimination of bound antigens. The antigen binding site is formed by the variable domain of one heavy chain, together with that of its associated light chain. Thus, each immunoglobulin has two antigen binding sites with remarkable affinity for a particular antigen. The variable domains are assembled by a process called V-(D)-J rearrangement and can then be subjected to somatic hypermutations which, after exposure to antigen and selection, allow affinity maturation for a particular antigen. The sequence is that of Immunoglobulin heavy variable 5-10-1 from Homo sapiens (Human).